A 275-amino-acid polypeptide reads, in one-letter code: C-type lectin domain family 12 member B (275 aa).

Residues 1-41 (MSDEVTYATLMLQDSARVRGNQDGNNLRKEGHPAQSSLWRG) are Cytoplasmic-facing. The ITIM motif signature appears at 5–10 (VTYATL). A Phosphotyrosine modification is found at Y7. A helical; Signal-anchor for type II membrane protein membrane pass occupies residues 42–64 (AALSLMTLCLVLVTGLVTLATMF). Residues 65-275 (LQVSNDINSD…ASLVKTEDLD (211 aa)) are Extracellular-facing. N-linked (GlcNAc...) asparagine glycans are attached at residues N91, N175, and N236. Positions 149–263 (YGNSCYYFSI…CSAEIPWICE (115 aa)) constitute a C-type lectin domain. Disulfide bonds link C171–C262 and C241–C254.

In terms of assembly, homodimer. Interacts (via ITIM motif) with PTPN6. Interacts (via ITIM motif) with PTPN11; this interaction triggers dephosphorylation and activation of PTPN11.

Its subcellular location is the cell membrane. Functionally, inhibitory receptor postulated to negatively regulate immune and non-immune functions. Upon phosphorylation, recruits SH2 domain-containing PTPN6 and PTPN11 phosphatases to its ITIM motif and antagonizes activation signals. Although it inhibits KLRK1/NKG2D-mediated signaling, it does not bind known ligands of KLRK1/NKG2D and therefore is not its inhibitory counterpart. May limit activation of myeloid cell subsets in response to infection or tissue inflammation. May protect target cells against natural killer cell-mediated lysis. May negatively regulate cell cycle and differentiation of melanocytes via inactivation of STAT3. In Mus musculus (Mouse), this protein is C-type lectin domain family 12 member B (Clec12b).